The following is a 234-amino-acid chain: Leucyl/phenylalanyl-tRNA--protein transferase (234 aa).

The protein belongs to the L/F-transferase family.

It localises to the cytoplasm. It carries out the reaction N-terminal L-lysyl-[protein] + L-leucyl-tRNA(Leu) = N-terminal L-leucyl-L-lysyl-[protein] + tRNA(Leu) + H(+). The catalysed reaction is N-terminal L-arginyl-[protein] + L-leucyl-tRNA(Leu) = N-terminal L-leucyl-L-arginyl-[protein] + tRNA(Leu) + H(+). It catalyses the reaction L-phenylalanyl-tRNA(Phe) + an N-terminal L-alpha-aminoacyl-[protein] = an N-terminal L-phenylalanyl-L-alpha-aminoacyl-[protein] + tRNA(Phe). Functions in the N-end rule pathway of protein degradation where it conjugates Leu, Phe and, less efficiently, Met from aminoacyl-tRNAs to the N-termini of proteins containing an N-terminal arginine or lysine. This is Leucyl/phenylalanyl-tRNA--protein transferase from Nitratidesulfovibrio vulgaris (strain ATCC 29579 / DSM 644 / CCUG 34227 / NCIMB 8303 / VKM B-1760 / Hildenborough) (Desulfovibrio vulgaris).